Consider the following 427-residue polypeptide: Intermediate conductance calcium-activated potassium channel protein 4 (427 aa).

Residues 29–49 form a helical membrane-spanning segment; it reads ALVLAGTGIGLMVLHAEMLWF. Residues 59-79 form a helical membrane-spanning segment; sequence FLVKCTISISTFLLLCLIVAF. A helical membrane pass occupies residues 108–128; the sequence is IVLELVVCGLHPAPVRGPPCV. A helical membrane pass occupies residues 143-163; it reads GFLGQGEALLSLAMLLRLYLV. The chain crosses the membrane as a helical span at residues 207–227; the sequence is LLLGLTLGLWLTTAWVLSVAE. The segment at residues 241–261 is an intramembrane region (pore-forming); that stretch reads LWLIPITFLTIGYGDVVPGTM. The chain crosses the membrane as a helical span at residues 265–285; sequence IVCLCTGVMGVCCTALLVAVV. The tract at residues 286-347 is calmodulin-binding; that stretch reads ARKLEFNKAE…RRHQRKLLAA (62 aa). Phosphohistidine is present on H358.

This sequence belongs to the potassium channel KCNN family. KCa3.1/KCNN4 subfamily. In terms of assembly, homodimer. Homotetramer. Heterotetramer of potassium channel proteins. Interacts with MTMR6; this interaction leads to selective dephosphorylation of PI(3)P in a lipid microdomain adjacent to KCNN4, resulting in a decrease of intermediate conductance calcium-activated potassium channel activity. Interacts (via the C-tail domain) with CALM1; the calmodulin binding is constitutive, does not require calcium and mediates calcium-dependent gating and four calmodulin molecules bind to one channel tetramer. In terms of processing, phosphorylation at His-358 by NDKB activates the intermediate conductance calcium-activated potassium channel activity, and conversely it's dephosphorylation by PHPT1 inhibits this activity. Widely expressed in non-excitable tissues.

It localises to the cell membrane. It is found in the cell projection. The protein localises to the ruffle membrane. It catalyses the reaction K(+)(in) = K(+)(out). The channel is inhibited by clotrimazole and charybdotoxin but is insensitive to apamin. Functionally, intermediate conductance calcium-activated potassium channel that mediates the voltage-independent transmembrane transfer of potassium across the cell membrane through a constitutive interaction with calmodulin which binds the intracellular calcium allowing its opening. The current is characterized by a voltage-independent activation, an intracellular calcium concentration increase-dependent activation and a single-channel conductance of about 25 picosiemens. Also presents an inwardly rectifying current, thus reducing its already small outward conductance of potassium ions, which is particularly the case when the membrane potential displays positive values, above + 20 mV. Controls calcium influx during vascular contractility by being responsible of membrane hyperpolarization induced by vasoactive factors in proliferative vascular smooth muscle cell types. Following calcium influx, the consecutive activation of KCNN4 channel leads to a hyperpolarization of the cell membrane potential and hence an increase of the electrical driving force for further calcium influx promoting sustained calcium entry in response to stimulation with chemotactic peptides. Required for maximal calcium influx and proliferation during the reactivation of naive T-cells. Plays a role in the late stages of EGF-induced macropinocytosis through activation by PI(3)P. The chain is Intermediate conductance calcium-activated potassium channel protein 4 from Homo sapiens (Human).